Reading from the N-terminus, the 568-residue chain is Potassium-transporting ATPase potassium-binding subunit (568 aa).

A run of 10 helical transmembrane segments spans residues 1–21, 60–80, 129–149, 174–194, 251–271, 278–298, 381–401, 420–440, 488–508, and 528–548; these read MWLT…LAVP, GLAL…LLRA, AITF…AGFI, VMLP…VPQA, IHIL…GSML, WVLF…VFTA, VGLI…GMMI, VMLA…LAAV, IGLA…ALAG, and PLFM…TFLP.

It belongs to the KdpA family. The system is composed of three essential subunits: KdpA, KdpB and KdpC.

The protein resides in the cell inner membrane. Its function is as follows. Part of the high-affinity ATP-driven potassium transport (or Kdp) system, which catalyzes the hydrolysis of ATP coupled with the electrogenic transport of potassium into the cytoplasm. This subunit binds the periplasmic potassium ions and delivers the ions to the membrane domain of KdpB through an intramembrane tunnel. This chain is Potassium-transporting ATPase potassium-binding subunit, found in Delftia acidovorans (strain DSM 14801 / SPH-1).